The chain runs to 1048 residues: Pleckstrin homology domain-containing family A member 6 (1048 aa).

Polar residues predominate over residues 1–22 (MSNKTGGKRPATTNSDIPNHNM). Residues 1–36 (MSNKTGGKRPATTNSDIPNHNMVSEVPPERPSVRAT) are disordered. One can recognise a PH domain in the interval 59–158 (PVTKAGWLFK…WIQAMGEAAR (100 aa)). Disordered regions lie at residues 165-318 (QKSV…MNQL) and 448-467 (SLQP…SYSR). A compositionally biased stretch (basic and acidic residues) spans 201–233 (PEPEAKTRGEGDGRGCEKAERRPERPEVKKEPP). Phosphoserine occurs at positions 247 and 251. The segment covering 267–290 (AQPNGWQYHSPSRPGSTAFPSQDG) has biased composition (polar residues). Residues S314, S459, S461, and S472 each carry the phosphoserine modification. Residues 456–465 (VPRSPSQGSY) show a composition bias toward polar residues. At Y492 the chain carries Phosphotyrosine. S591 bears the Phosphoserine mark. Positions 663-746 (RKNNPSRGTD…HQTLPLDTPR (84 aa)) are disordered. Low complexity predominate over residues 687 to 711 (SSNSPASPLSSASLTSPLSPFSLVS). A compositionally biased stretch (polar residues) spans 712 to 721 (GSQGSPTKPG). T744 is modified (phosphothreonine). S777 carries the post-translational modification Phosphoserine. Position 784 is a phosphothreonine (T784). Residues 793–858 (ASGLTNGLSS…PAPDPSPRPA (66 aa)) form a disordered region. The segment covering 794-803 (SGLTNGLSSQ) has biased composition (polar residues). Position 801 is a phosphoserine (S801). The segment covering 815–827 (GKVKMSVEEQIDR) has biased composition (basic and acidic residues). Basic residues predominate over residues 828-842 (MRRHQSGSMREKRRS). S848, S854, and S867 each carry phosphoserine. Phosphothreonine is present on T920. S940 is modified (phosphoserine). 2 disordered regions span residues 968–989 (PIGE…QEQE) and 1005–1048 (RGRM…TMRV). Phosphothreonine is present on T1015. Residues 1016–1030 (PSPPTSPASPAPPAN) are compositionally biased toward pro residues. Position 1017 is a phosphoserine (S1017). T1020 carries the post-translational modification Phosphothreonine. A phosphoserine mark is found at S1021 and S1024.

As to expression, highly expressed in heart, kidney and throughout the brain.

In Homo sapiens (Human), this protein is Pleckstrin homology domain-containing family A member 6 (PLEKHA6).